The chain runs to 91 residues: Protein LURE 1.6 (91 aa).

Residues 1–20 (MKLPFIFLITLLIFVSSCTS) form the signal peptide. 3 cysteine pairs are disulfide-bonded: C59–C76, C62–C83, and C66–C85.

It belongs to the DEFL family. As to expression, expressed in the pistil. Detected in the synergid cells.

Its subcellular location is the secreted. Functionally, pollen tube attractants guiding pollen tubes to the ovular micropyle. This chain is Protein LURE 1.6, found in Arabidopsis thaliana (Mouse-ear cress).